We begin with the raw amino-acid sequence, 2208 residues long: Glutamate synthase 1 [NADH], chloroplastic (2208 aa).

Residues 1–49 (MSAASSSSVLHLRTNQQLLSLRSLKNSTSVASQLAVTSGVSRRRSCTAR) constitute a chloroplast transit peptide. Catalysis depends on cysteine 117, which acts as the Nucleophile. The Glutamine amidotransferase type-2 domain occupies 117–521 (CGVGFVAELS…PGMMLLVDFE (405 aa)). The disordered stretch occupies residues 1040 to 1067 (GKSNTGEGGELPSRMEPLADGSRNPKRS). 1211–1268 (LAETHQTLVANDLRGRTVLQTDGQLKTGRDVAVAALLGAEEFGFSTAPLITLGCIMMR) serves as a coordination point for FMN. [3Fe-4S] cluster-binding residues include cysteine 1264, cysteine 1270, and cysteine 1275. 1995–2009 (GGGDTGTDCIGTSIR) is a binding site for NAD(+).

It belongs to the glutamate synthase family. In terms of assembly, monomer. Requires [3Fe-4S] cluster as cofactor. It depends on FAD as a cofactor. FMN is required as a cofactor. In terms of tissue distribution, highly expressed in roots and at low levels in leaves.

Its subcellular location is the plastid. It localises to the chloroplast. It catalyses the reaction 2 L-glutamate + NAD(+) = L-glutamine + 2-oxoglutarate + NADH + H(+). Its pathway is amino-acid biosynthesis; L-glutamate biosynthesis via GLT pathway; L-glutamate from 2-oxoglutarate and L-glutamine (NAD(+) route): step 1/1. It functions in the pathway energy metabolism; nitrogen metabolism. Functionally, involved in glutamate biosynthesis. Required for non-photorespiratory ammonium assimilation. Probably involved in primary ammonium assimilation in roots. The polypeptide is Glutamate synthase 1 [NADH], chloroplastic (GLT1) (Arabidopsis thaliana (Mouse-ear cress)).